The following is a 787-amino-acid chain: Integrin beta-6 (787 aa).

The first 21 residues, 1–21 (MGIELVCLFLLLLGRNDHVQG), serve as a signal peptide directing secretion. Residues 22-71 (GCAWSGAETCSDCLLTGPHCAWCSQENFTHLSGAGERCDTPENLLAKGCQ) enclose the PSI domain. Topologically, residues 22–708 (GCAWSGAETC…KDCPKPPNIP (687 aa)) are extracellular. Disulfide bonds link cysteine 23-cysteine 41, cysteine 31-cysteine 454, cysteine 34-cysteine 59, cysteine 44-cysteine 70, cysteine 197-cysteine 204, cysteine 252-cysteine 293, cysteine 394-cysteine 406, cysteine 426-cysteine 452, cysteine 456-cysteine 476, cysteine 467-cysteine 479, cysteine 481-cysteine 490, cysteine 492-cysteine 519, cysteine 502-cysteine 517, cysteine 511-cysteine 522, cysteine 524-cysteine 537, cysteine 539-cysteine 560, cysteine 544-cysteine 558, cysteine 552-cysteine 563, and cysteine 565-cysteine 574. N-linked (GlcNAc...) asparagine glycans are attached at residues asparagine 48 and asparagine 97. In terms of domain architecture, VWFA spans 131–371 (YPVDLYYLMD…QLIISAYEEL (241 aa)). 3 residues coordinate Mg(2+): aspartate 140, serine 142, and serine 144. Ca(2+)-binding residues include serine 144, aspartate 147, aspartate 148, and glutamate 179. Residues asparagine 235, aspartate 237, proline 239, and glutamate 240 each coordinate Ca(2+). Glutamate 240 contributes to the Mg(2+) binding site. Residue asparagine 260 is glycosylated (N-linked (GlcNAc...) asparagine). Residues aspartate 271 and lysine 355 each coordinate Ca(2+). N-linked (GlcNAc...) asparagine glycosylation occurs at asparagine 387. N-linked (GlcNAc...) asparagine glycosylation is present at asparagine 418. I-EGF domains lie at 456–491 (CQREVEANSSKCHHGNGSFQCGVCACNPGHMGPRCE), 492–538 (CGED…PYCQ), 539–575 (CDNFSCLRHKGLLCGDNGDCDCGECVCRDGWTGEYCN), and 576–615 (CTTSRDACASEDGVLCSGRGDCVCGKCVCRNPGASGPTCE). 2 N-linked (GlcNAc...) asparagine glycosylation sites follow: asparagine 463 and asparagine 471. Asparagine 541 carries an N-linked (GlcNAc...) asparagine glycan. The N-linked (GlcNAc...) asparagine glycan is linked to asparagine 575. 9 cysteine pairs are disulfide-bonded: cysteine 576-cysteine 599, cysteine 583-cysteine 597, cysteine 591-cysteine 602, cysteine 604-cysteine 614, cysteine 617-cysteine 620, cysteine 624-cysteine 669, cysteine 630-cysteine 649, cysteine 633-cysteine 645, and cysteine 677-cysteine 701. The N-linked (GlcNAc...) asparagine glycan is linked to asparagine 695. A helical membrane pass occupies residues 709–729 (MIMLGVSLAILLIGVVLLCIW). Positions 730 to 757 (KLLVSFHDRKEVAKFEAERSKAKWQTGT) are interaction with HAX1. Over 730-787 (KLLVSFHDRKEVAKFEAERSKAKWQTGTNPLYRGSTSTFKNVTYKHREKHKVGLSSDG) the chain is Cytoplasmic.

Belongs to the integrin beta chain family. In terms of assembly, heterodimer of an alpha and a beta subunit. Interacts with FLNB. Interacts with HAX1. ITGAV:ITGB6 interacts with FBN1. ITGAV:ITGB6 interacts with TGFB1.

Its subcellular location is the cell membrane. The protein resides in the cell junction. It localises to the focal adhesion. Its function is as follows. Integrin alpha-V:beta-6 (ITGAV:ITGB6) is a receptor for fibronectin and cytotactin. It recognizes the sequence R-G-D in its ligands. ITGAV:ITGB6 acts as a receptor for fibrillin-1 (FBN1) and mediates R-G-D-dependent cell adhesion to FBN1. Integrin alpha-V:beta-6 (ITGAV:ITGB6) mediates R-G-D-dependent release of transforming growth factor beta-1 (TGF-beta-1) from regulatory Latency-associated peptide (LAP), thereby playing a key role in TGF-beta-1 activation. The protein is Integrin beta-6 (Itgb6) of Rattus norvegicus (Rat).